The following is a 490-amino-acid chain: Apocarotenoid-15,15'-oxygenase (490 aa).

Histidine 183 provides a ligand contact to Fe cation. Serine 206 is a binding site for substrate. Histidine 238 contributes to the Fe cation binding site. Phenylalanine 303 contributes to the substrate binding site. The Fe cation site is built by histidine 304 and histidine 484.

It belongs to the carotenoid oxygenase family. Requires Fe(2+) as cofactor.

The enzyme catalyses all-trans-8'-apo-beta-carotenal + O2 = (2E,4E,6E)-2,6-dimethylocta-2,4,6-trienedial + all-trans-retinal. Cleaves a number of carotenals and carotenols in the all-trans configuration at the 15-15' double bond producing retinal or retinol, respectively. Also shows activity toward lycopenals and the corresponding alcohols. Does not cleave beta-carotene or lycopene. The chain is Apocarotenoid-15,15'-oxygenase from Synechocystis sp. (strain ATCC 27184 / PCC 6803 / Kazusa).